Here is a 317-residue protein sequence, read N- to C-terminus: Acetyl-coenzyme A carboxylase carboxyl transferase subunit alpha (317 aa).

The 254-residue stretch at 40–293 (LEVRVREAIV…GDVIASALAE (254 aa)) folds into the CoA carboxyltransferase C-terminal domain.

Belongs to the AccA family. As to quaternary structure, acetyl-CoA carboxylase is a heterohexamer composed of biotin carboxyl carrier protein (AccB), biotin carboxylase (AccC) and two subunits each of ACCase subunit alpha (AccA) and ACCase subunit beta (AccD).

Its subcellular location is the cytoplasm. It catalyses the reaction N(6)-carboxybiotinyl-L-lysyl-[protein] + acetyl-CoA = N(6)-biotinyl-L-lysyl-[protein] + malonyl-CoA. Its pathway is lipid metabolism; malonyl-CoA biosynthesis; malonyl-CoA from acetyl-CoA: step 1/1. Functionally, component of the acetyl coenzyme A carboxylase (ACC) complex. First, biotin carboxylase catalyzes the carboxylation of biotin on its carrier protein (BCCP) and then the CO(2) group is transferred by the carboxyltransferase to acetyl-CoA to form malonyl-CoA. The sequence is that of Acetyl-coenzyme A carboxylase carboxyl transferase subunit alpha from Rhizobium johnstonii (strain DSM 114642 / LMG 32736 / 3841) (Rhizobium leguminosarum bv. viciae).